The following is a 279-amino-acid chain: RRP15-like protein (279 aa).

Disordered regions lie at residues 1–40 (MALLTAKRPKKEAAPATDTSNNESDSEDSQNVDGDTGANA), 56–120 (GPTV…TERR), and 200–279 (KSTA…DEED). Residues 73 to 83 (KTSEAAKKPGF) are compositionally biased toward basic and acidic residues. Composition is skewed to acidic residues over residues 93–104 (KEEDDDDEEDGD) and 213–224 (QETDDDDEDDTA). Basic and acidic residues predominate over residues 232–245 (KKSEWNVLREDFMT). Acidic residues predominate over residues 267-279 (DEADDSDDDDEED).

The protein belongs to the RRP15 family.

This chain is RRP15-like protein, found in Drosophila pseudoobscura pseudoobscura (Fruit fly).